Reading from the N-terminus, the 367-residue chain is Anhydro-N-acetylmuramic acid kinase (367 aa).

13-20 contributes to the ATP binding site; that stretch reads GTSMDGAD.

The protein belongs to the anhydro-N-acetylmuramic acid kinase family.

It carries out the reaction 1,6-anhydro-N-acetyl-beta-muramate + ATP + H2O = N-acetyl-D-muramate 6-phosphate + ADP + H(+). The protein operates within amino-sugar metabolism; 1,6-anhydro-N-acetylmuramate degradation. It participates in cell wall biogenesis; peptidoglycan recycling. In terms of biological role, catalyzes the specific phosphorylation of 1,6-anhydro-N-acetylmuramic acid (anhMurNAc) with the simultaneous cleavage of the 1,6-anhydro ring, generating MurNAc-6-P. Is required for the utilization of anhMurNAc either imported from the medium or derived from its own cell wall murein, and thus plays a role in cell wall recycling. In Neisseria meningitidis serogroup C / serotype 2a (strain ATCC 700532 / DSM 15464 / FAM18), this protein is Anhydro-N-acetylmuramic acid kinase.